A 467-amino-acid polypeptide reads, in one-letter code: ATP synthase subunit beta (467 aa).

157-164 (GGAGVGKT) is an ATP binding site.

Belongs to the ATPase alpha/beta chains family. F-type ATPases have 2 components, CF(1) - the catalytic core - and CF(0) - the membrane proton channel. CF(1) has five subunits: alpha(3), beta(3), gamma(1), delta(1), epsilon(1). CF(0) has three main subunits: a(1), b(2) and c(9-12). The alpha and beta chains form an alternating ring which encloses part of the gamma chain. CF(1) is attached to CF(0) by a central stalk formed by the gamma and epsilon chains, while a peripheral stalk is formed by the delta and b chains.

Its subcellular location is the cell inner membrane. It carries out the reaction ATP + H2O + 4 H(+)(in) = ADP + phosphate + 5 H(+)(out). In terms of biological role, produces ATP from ADP in the presence of a proton gradient across the membrane. The catalytic sites are hosted primarily by the beta subunits. The polypeptide is ATP synthase subunit beta (Desulfosudis oleivorans (strain DSM 6200 / JCM 39069 / Hxd3) (Desulfococcus oleovorans)).